We begin with the raw amino-acid sequence, 170 residues long: Cathelicidin antimicrobial peptide (170 aa).

Residues 1–30 (MKTQRHGPSLGRWSLVLLLLGLVMPLAIVA) form the signal peptide. A propeptide spans 31–131 (QVLSYQEAVL…DISCDKDNRR (101 aa)) (cathelin-like domain (CLD)). Intrachain disulfides connect cysteine 86/cysteine 97 and cysteine 108/cysteine 125. The active core stretch occupies residues 150–162 (LKKIGQKIKDFWG).

This sequence belongs to the cathelicidin family. As to quaternary structure, monomer, homodimer or homotrimer (in vitro). Oligomerizes as tetra- or hexamer in solution (in vitro). Post-translationally, proteolytically cleaved by proteinase PRTN3 into antibacterial peptide LL-37. Proteolytically cleaved by cathepsin CTSG and neutrophil elastase ELANE. Resistant to proteolytic degradation in solution, and when bound to both zwitterionic (mimicking mammalian membranes) and negatively charged membranes (mimicking bacterial membranes). In terms of processing, after secretion onto the skin surface, the CAMP gene product is processed by a serine protease-dependent mechanism into multiple novel antimicrobial peptides distinct from and shorter than cathelicidin LL-37. These peptides show enhanced antimicrobial action, acquiring the ability to kill skin pathogens such as S.aureus, E.coli and C.albicans. These peptides have lost the ability to stimulate CXCL8/IL8 release from keratinocytes. The peptides act synergistically, killing bacteria at lower concentrations when present together, and maintain activity at increased salt condition.

The protein resides in the secreted. It localises to the vesicle. Its function is as follows. Antimicrobial protein that is an integral component of the innate immune system. Binds to bacterial lipopolysaccharides (LPS). Acts via neutrophil N-formyl peptide receptors to enhance the release of CXCL2. Postsecretory processing generates multiple cathelicidin antimicrobial peptides with various lengths which act as a topical antimicrobial defense in sweat on skin. The unprocessed precursor form, cathelicidin antimicrobial peptide, inhibits the growth of Gram-negative E.coli and E.aerogenes with efficiencies comparable to that of the mature peptide LL-37 (in vitro). Functionally, antimicrobial peptide that is an integral component of the innate immune system. Binds to bacterial lipopolysaccharides (LPS). Causes membrane permeabilization by forming transmembrane pores (in vitro). Causes lysis of E.coli. Exhibits antimicrobial activity against Gram-negative bacteria such as P.aeruginosa, S.typhimurium, E.aerogenes, E.coli and P.syringae, Gram-positive bacteria such as L.monocytogenes, S.epidermidis, S.pyogenes and S.aureus, as well as vancomycin-resistant enterococci (in vitro). Exhibits antimicrobial activity against methicillin-resistant S.aureus, P.mirabilis, and C.albicans in low-salt media, but not in media containing 100 mM NaCl (in vitro). Forms chiral supramolecular assemblies with quinolone signal (PQS) molecules of P.aeruginosa, which may lead to interference of bacterial quorum signaling and perturbance of bacterial biofilm formation. May form supramolecular fiber-like assemblies on bacterial membranes. Induces cytokine and chemokine producation as well as TNF/TNFA and CSF2/GMCSF production in normal human keratinocytes. Exhibits hemolytic activity against red blood cells. In terms of biological role, exhibits antimicrobial activity against E.coli and B.megaterium (in vitro). The chain is Cathelicidin antimicrobial peptide from Trachypithecus cristatus (Silvered leaf-monkey).